The chain runs to 226 residues: ATP synthase subunit a (226 aa).

Transmembrane regions (helical) follow at residues 17 to 37, 78 to 98, 104 to 124, 175 to 195, and 201 to 221; these read FLFV…AKLA, LVAT…IPGF, NINF…FEGI, LFVW…GFAL, and FLQT…AVLL.

This sequence belongs to the ATPase A chain family. F-type ATPases have 2 components, CF(1) - the catalytic core - and CF(0) - the membrane proton channel. CF(1) has five subunits: alpha(3), beta(3), gamma(1), delta(1), epsilon(1). CF(0) has three main subunits: a(1), b(2) and c(9-12). The alpha and beta chains form an alternating ring which encloses part of the gamma chain. CF(1) is attached to CF(0) by a central stalk formed by the gamma and epsilon chains, while a peripheral stalk is formed by the delta and b chains.

It localises to the cell inner membrane. Key component of the proton channel; it plays a direct role in the translocation of protons across the membrane. The polypeptide is ATP synthase subunit a (Nitratiruptor sp. (strain SB155-2)).